The sequence spans 121 residues: Large ribosomal subunit protein bL12 (121 aa).

It belongs to the bacterial ribosomal protein bL12 family. As to quaternary structure, homodimer. Part of the ribosomal stalk of the 50S ribosomal subunit. Forms a multimeric L10(L12)X complex, where L10 forms an elongated spine to which 2 to 4 L12 dimers bind in a sequential fashion. Binds GTP-bound translation factors.

Functionally, forms part of the ribosomal stalk which helps the ribosome interact with GTP-bound translation factors. Is thus essential for accurate translation. This Halalkalibacterium halodurans (strain ATCC BAA-125 / DSM 18197 / FERM 7344 / JCM 9153 / C-125) (Bacillus halodurans) protein is Large ribosomal subunit protein bL12.